The chain runs to 273 residues: Octanoyl-[GcvH]:protein N-octanoyltransferase (273 aa).

The 206-residue stretch at Ala-40–Thr-245 folds into the BPL/LPL catalytic domain. The active-site Acyl-thioester intermediate is the Cys-144.

This sequence belongs to the octanoyltransferase LipL family.

It catalyses the reaction N(6)-octanoyl-L-lysyl-[glycine-cleavage complex H protein] + L-lysyl-[lipoyl-carrier protein] = N(6)-octanoyl-L-lysyl-[lipoyl-carrier protein] + L-lysyl-[glycine-cleavage complex H protein]. The protein operates within protein modification; protein lipoylation via endogenous pathway; protein N(6)-(lipoyl)lysine from octanoyl-[acyl-carrier-protein]. Its function is as follows. Catalyzes the amidotransfer (transamidation) of the octanoyl moiety from octanoyl-GcvH to the lipoyl domain of the E2 subunit of lipoate-dependent enzymes. The protein is Octanoyl-[GcvH]:protein N-octanoyltransferase of Exiguobacterium sibiricum (strain DSM 17290 / CCUG 55495 / CIP 109462 / JCM 13490 / 255-15).